The sequence spans 581 residues: 2-succinyl-5-enolpyruvyl-6-hydroxy-3-cyclohexene-1-carboxylate synthase (581 aa).

It belongs to the TPP enzyme family. MenD subfamily. Homodimer. It depends on Mg(2+) as a cofactor. Mn(2+) serves as cofactor. The cofactor is thiamine diphosphate.

It carries out the reaction isochorismate + 2-oxoglutarate + H(+) = 5-enolpyruvoyl-6-hydroxy-2-succinyl-cyclohex-3-ene-1-carboxylate + CO2. The protein operates within quinol/quinone metabolism; 1,4-dihydroxy-2-naphthoate biosynthesis; 1,4-dihydroxy-2-naphthoate from chorismate: step 2/7. It functions in the pathway quinol/quinone metabolism; menaquinone biosynthesis. In terms of biological role, catalyzes the thiamine diphosphate-dependent decarboxylation of 2-oxoglutarate and the subsequent addition of the resulting succinic semialdehyde-thiamine pyrophosphate anion to isochorismate to yield 2-succinyl-5-enolpyruvyl-6-hydroxy-3-cyclohexene-1-carboxylate (SEPHCHC). The polypeptide is 2-succinyl-5-enolpyruvyl-6-hydroxy-3-cyclohexene-1-carboxylate synthase (Psychromonas ingrahamii (strain DSM 17664 / CCUG 51855 / 37)).